A 2318-amino-acid chain; its full sequence is Neurogenic locus notch homolog protein 3 (2318 aa).

Basic residues predominate over residues M1–L14. The segment at M1–P20 is disordered. Residues M1–A39 form the signal peptide. 3 consecutive EGF-like domains span residues A40–Q78, L79–S119, and Q120–Q157. Over A40–P1643 the chain is Extracellular. Intrachain disulfides connect C43-C55, C49-C66, C68-C77, C83-C94, C88-C107, C109-C118, C124-C135, C129-C145, C147-C156, C163-C175, C169-C184, C186-C195, C202-C213, C207-C223, C225-C234, C241-C252, C246-C261, C263-C272, C279-C292, C286-C301, C303-C312, C319-C330, C324-C339, C341-C350, C356-C367, C361-C378, C380-C389, C396-C409, C403-C418, C420-C429, C436-C447, C441-C456, C458-C467, C474-C485, C479-C494, C496-C505, C512-C523, C517-C532, C534-C543, C550-C560, C555-C569, C571-C580, C587-C598, C592-C607, C609-C618, C625-C635, C630-C644, C646-C655, C662-C673, C667-C682, C684-C693, C700-C710, C705-C719, C721-C730, C739-C750, C744-C759, C761-C770, C776-C787, C781-C797, C799-C808, C815-C827, C821-C836, C838-C847, C854-C865, C859-C874, C876-C885, C892-C902, C897-C911, C913-C922, C929-C940, C934-C949, C951-C960, C967-C978, C972-C987, C989-C998, C1005-C1016, C1010-C1023, C1025-C1034, C1041-C1062, C1056-C1071, C1073-C1082, C1089-C1100, C1094-C1109, C1111-C1120, C1127-C1138, C1132-C1147, C1149-C1158, C1165-C1183, C1177-C1192, C1194-C1203, C1210-C1223, C1215-C1233, C1235-C1244, C1251-C1262, C1256-C1276, C1278-C1287, C1294-C1305, C1299-C1314, and C1316-C1325. One can recognise an EGF-like 4; calcium-binding domain in the interval D159 to E196. An EGF-like 5 domain is found at P198–E235. The region spanning N237–T273 is the EGF-like 6; calcium-binding domain. Positions D275–S313 constitute an EGF-like 7 domain. The 37-residue stretch at N315–H351 folds into the EGF-like 8; calcium-binding domain. One can recognise an EGF-like 9 domain in the interval L352–D390. In terms of domain architecture, EGF-like 10; calcium-binding spans D392–E430. One can recognise an EGF-like 11; calcium-binding domain in the interval D432–E468. The region spanning D470–Q506 is the EGF-like 12; calcium-binding domain. The region spanning D508–E544 is the EGF-like 13; calcium-binding domain. An EGF-like 14; calcium-binding domain is found at N546–E581. Positions Q583–E619 constitute an EGF-like 15; calcium-binding domain. In terms of domain architecture, EGF-like 16; calcium-binding spans N621 to N656. In terms of domain architecture, EGF-like 17; calcium-binding spans E658 to L694. 3 EGF-like domains span residues A696 to S731, A735 to E771, and V772 to Q809. Positions D811 to D848 constitute an EGF-like 21; calcium-binding domain. Positions D850–A886 constitute an EGF-like 22; calcium-binding domain. The 36-residue stretch at D888–E923 folds into the EGF-like 23; calcium-binding domain. 5 consecutive EGF-like domains span residues D925–Q961, E963–Q999, P1001–D1035, Q1037–E1083, and E1085–E1121. In terms of domain architecture, EGF-like 29; calcium-binding spans N1123–E1159. Positions N1161 to E1204 constitute an EGF-like 30; calcium-binding domain. N1180 carries an N-linked (GlcNAc...) asparagine glycan. EGF-like domains are found at residues D1206–Q1245, A1247–E1288, V1290–R1326, and T1336–E1374. Residue N1337 is glycosylated (N-linked (GlcNAc...) asparagine). 12 cysteine pairs are disulfide-bonded: C1340-C1351, C1345-C1362, C1364-C1373, C1388-C1411, C1393-C1406, C1402-C1418, C1429-C1452, C1434-C1447, C1443-C1459, C1468-C1494, C1476-C1489, and C1485-C1501. LNR repeat units follow at residues C1388–Q1428, C1429–R1466, and C1468–P1506. N1439 is a glycosylation site (N-linked (GlcNAc...) asparagine). The helical transmembrane segment at L1644–M1664 threads the bilayer. The Cytoplasmic portion of the chain corresponds to V1665–A2318. ANK repeat units lie at residues T1839–A1868, S1872–A1902, D1906–A1935, L1939–M1968, and K1972–I2001. 2 disordered regions span residues L2025 to C2045 and Q2058 to G2126. The span at P2028–C2045 shows a compositional bias: low complexity. R2174 carries the post-translational modification Omega-N-methylarginine. The segment covering S2184–P2193 has biased composition (low complexity). Residues S2184 to A2318 form a disordered region. Residues H2242–P2261 are PEST-like. The segment covering S2262–S2282 has biased composition (low complexity). Positions S2296–G2305 are enriched in polar residues.

Belongs to the NOTCH family. As to quaternary structure, interacts with PSMA1. Heterodimer of a C-terminal fragment N(TM) and a N-terminal fragment N(EC) which are probably linked by disulfide bonds. Interacts with MAML1, MAML2 and MAML3 which act as transcriptional coactivators for NOTCH3. Interacts with HIF1AN. Synthesized in the endoplasmic reticulum as an inactive form which is proteolytically cleaved by a furin-like convertase in the trans-Golgi network before it reaches the plasma membrane to yield an active, ligand-accessible form. Cleavage results in a C-terminal fragment N(TM) and a N-terminal fragment N(EC). Following ligand binding, it is cleaved by TNF-alpha converting enzyme (TACE) to yield a membrane-associated intermediate fragment called notch extracellular truncation (NEXT). This fragment is then cleaved by presenilin dependent gamma-secretase to release a notch-derived peptide containing the intracellular domain (NICD) from the membrane. In terms of processing, phosphorylated. Post-translationally, hydroxylated by HIF1AN. As to expression, proliferating neuroepithelium.

It localises to the cell membrane. The protein resides in the nucleus. Its function is as follows. Functions as a receptor for membrane-bound ligands Jagged1, Jagged2 and Delta1 to regulate cell-fate determination. Upon ligand activation through the released notch intracellular domain (NICD) it forms a transcriptional activator complex with RBPJ/RBPSUH and activates genes of the enhancer of split locus. Affects the implementation of differentiation, proliferation and apoptotic programs. May play a role during CNS development. This Mus musculus (Mouse) protein is Neurogenic locus notch homolog protein 3 (Notch3).